A 103-amino-acid chain; its full sequence is Co-chaperonin GroES (103 aa).

This sequence belongs to the GroES chaperonin family. Heptamer of 7 subunits arranged in a ring. Interacts with the chaperonin GroEL.

It localises to the cytoplasm. Its function is as follows. Together with the chaperonin GroEL, plays an essential role in assisting protein folding. The GroEL-GroES system forms a nano-cage that allows encapsulation of the non-native substrate proteins and provides a physical environment optimized to promote and accelerate protein folding. GroES binds to the apical surface of the GroEL ring, thereby capping the opening of the GroEL channel. The protein is Co-chaperonin GroES of Synechococcus sp. (strain CC9311).